The primary structure comprises 242 residues: Ribonuclease PH (242 aa).

Phosphate-binding positions include R86 and 124–126 (GTR).

The protein belongs to the RNase PH family. Homohexameric ring arranged as a trimer of dimers.

It carries out the reaction tRNA(n+1) + phosphate = tRNA(n) + a ribonucleoside 5'-diphosphate. Its function is as follows. Phosphorolytic 3'-5' exoribonuclease that plays an important role in tRNA 3'-end maturation. Removes nucleotide residues following the 3'-CCA terminus of tRNAs; can also add nucleotides to the ends of RNA molecules by using nucleoside diphosphates as substrates, but this may not be physiologically important. Probably plays a role in initiation of 16S rRNA degradation (leading to ribosome degradation) during starvation. The chain is Ribonuclease PH from Caulobacter sp. (strain K31).